Reading from the N-terminus, the 316-residue chain is Serpentine receptor class delta-48 (316 aa).

7 helical membrane passes run 8 to 28 (FFYITFFILVLPTQIFGIFVI), 42 to 62 (FLLCNLICQIISVATLCLLQL), 89 to 109 (LFYVLSQISTLMTYFLVFITI), 127 to 147 (VVIILMLLLPIFITMVAQIDL), 185 to 205 (FLLTVIIFGSVFLLPPAGFFI), 236 to 256 (TLQSFLPLVCICPIFACYFVV), and 269 to 289 (ILPVLVMLPTLFDPYIILYSV).

This sequence belongs to the nematode receptor-like protein srd family.

The protein resides in the membrane. In Caenorhabditis elegans, this protein is Serpentine receptor class delta-48 (srd-48).